The chain runs to 119 residues: Cysteine-rich DPF motif domain-containing protein 1 (119 aa).

The protein belongs to the CDPF1 family.

This Mus musculus (Mouse) protein is Cysteine-rich DPF motif domain-containing protein 1 (Cdpf1).